A 704-amino-acid polypeptide reads, in one-letter code: Chloride intracellular channel protein 6 (704 aa).

The span at 1–13 (MAEAAEPEGVAPG) shows a compositional bias: low complexity. The segment at 1–446 (MAEAAEPEGV…EDGEASEPRA (446 aa)) is disordered. The span at 39-48 (EGPEGSEGAE) shows a compositional bias: acidic residues. Residue serine 44 is modified to Phosphoserine. Positions 67–83 (RGPEAEARGTRGAHGET) are enriched in basic and acidic residues. Residues 90 to 100 (PEGAEVPQGGE) are compositionally biased toward low complexity. Over residues 121–147 (PRGEAQREPEDSAAPERQEEAEQRPEV) the composition is skewed to basic and acidic residues. 13 repeat units span residues 157–166 (GDSVDAEGPL), 167–176 (GDNIEAEGPA), 177–186 (GDSVEAEGRV), 187–196 (GDSVDAEGPA), 197–206 (GDSVDAEGPL), 207–216 (GDNIQAEGPA), 217–226 (GDSVDAEGRV), 227–236 (GDSVDAEGPA), 237–246 (GDSVDAEGRV), 247–256 (GDSVEAGDPA), 257–266 (GDGVEAGVPA), 267–276 (GDSVEAEGPA), and 277–286 (GDSMDAEGPA). The 13 X 10 AA tandem repeat of G-D-[SNG]-[VIM]-[DEQ]-A-[EAG]-[GDVE]-[PRG]-[LAVP] stretch occupies residues 157-282 (GDSVDAEGPL…EGPAGDSMDA (126 aa)). A compositionally biased stretch (polar residues) spans 295–306 (EPQQSGDGSLSP). Composition is skewed to basic and acidic residues over residues 350-360 (ARADAGEDRVG) and 371-385 (EERRERSPEGPREEE). Phosphoserine occurs at positions 397 and 442. A compositionally biased stretch (basic and acidic residues) spans 434 to 446 (GRREDGEASEPRA). The G-site signature appears at 487-490 (CPFS). Residues 489 to 509 (FSQRLFMILWLKGVIFNVTTV) form a helical membrane-spanning segment. One can recognise a GST C-terminal domain in the interval 556–704 (YPKLGTQHPE…AYSDVAKRMK (149 aa)).

It belongs to the chloride channel CLIC family. In terms of assembly, monomer (soluble state). Interacts with dopamine receptors DRD2, DRD3 and DRD4. Post-translationally, phosphorylated. As to expression, expressed in brain, placenta, pancreas, liver, lung, heart, kidney, liver, spleen, soleus muscle, and brown fat.

It localises to the cytoplasm. It is found in the cell membrane. The catalysed reaction is chloride(in) = chloride(out). Its activity is regulated as follows. Channel activity is redox- and pH-regulated. Inhibited by IAA-94. Functionally, in the soluble state, catalyzes glutaredoxin-like thiol disulfide exchange reactions with reduced glutathione as electron donor. Can insert into membranes and form voltage-dependent chloride-selective channels. The channel opens upon membrane depolarization at positive voltages and closes at negative membrane voltages. May play a critical role in water-secreting cells, possibly through the regulation of chloride ion transport. This Homo sapiens (Human) protein is Chloride intracellular channel protein 6.